The following is a 400-amino-acid chain: uncharacterized protein (400 aa).

Residues 1-23 form the signal peptide; the sequence is MSRKLLLALTFLVVLGIAVVVMA.

This is an uncharacterized protein from Archaeoglobus fulgidus (strain ATCC 49558 / DSM 4304 / JCM 9628 / NBRC 100126 / VC-16).